We begin with the raw amino-acid sequence, 483 residues long: Probable serine incorporator (483 aa).

A run of 11 helical transmembrane segments spans residues S43–L63, I109–S129, L146–G166, W169–V189, I218–F238, F249–S269, L274–W294, S295–L315, A338–Y358, Y414–L434, and V457–L477.

Belongs to the TDE1 family.

It is found in the endoplasmic reticulum membrane. Its function is as follows. Enhances the incorporation of serine into phosphatidylserine and sphingolipids. The chain is Probable serine incorporator (serinc) from Monosiga brevicollis (Choanoflagellate).